The primary structure comprises 104 residues: Co-chaperonin GroES (104 aa).

It belongs to the GroES chaperonin family. As to quaternary structure, heptamer of 7 subunits arranged in a ring. Interacts with the chaperonin GroEL.

It is found in the cytoplasm. Its function is as follows. Together with the chaperonin GroEL, plays an essential role in assisting protein folding. The GroEL-GroES system forms a nano-cage that allows encapsulation of the non-native substrate proteins and provides a physical environment optimized to promote and accelerate protein folding. GroES binds to the apical surface of the GroEL ring, thereby capping the opening of the GroEL channel. This Acidiphilium cryptum (strain JF-5) protein is Co-chaperonin GroES.